Consider the following 138-residue polypeptide: MLQPARRKYRKEQKGRNTGVATRGATVAFGDFGLKCTDRGRLTARQIEAARRAISRHVKRGGRIWIRVFPDKPISTKPAEVRMGNGKGNPEYYVAEIQPGKIVFEIVGVPEELAREAFRLAAAKLPLRTTFVSRLIGA.

Residues 1–13 (MLQPARRKYRKEQ) show a composition bias toward basic residues. The interval 1–20 (MLQPARRKYRKEQKGRNTGV) is disordered.

The protein belongs to the universal ribosomal protein uL16 family. As to quaternary structure, part of the 50S ribosomal subunit.

In terms of biological role, binds 23S rRNA and is also seen to make contacts with the A and possibly P site tRNAs. The chain is Large ribosomal subunit protein uL16 from Verminephrobacter eiseniae (strain EF01-2).